Consider the following 105-residue polypeptide: Small ribosomal subunit protein eS10A (105 aa).

It belongs to the eukaryotic ribosomal protein eS10 family. In terms of assembly, component of the small ribosomal subunit (SSU). Mature yeast ribosomes consist of a small (40S) and a large (60S) subunit. The 40S small subunit contains 1 molecule of ribosomal RNA (18S rRNA) and 33 different proteins (encoded by 57 genes). The large 60S subunit contains 3 rRNA molecules (25S, 5.8S and 5S rRNA) and 46 different proteins (encoded by 81 genes). eS10 interacts with GCN1 (via middle region); this interaction is direct and promotes GCN2 kinase activity. In terms of processing, the N-terminus is not modified.

It localises to the cytoplasm. Functionally, component of the ribosome, a large ribonucleoprotein complex responsible for the synthesis of proteins in the cell. The small ribosomal subunit (SSU) binds messenger RNAs (mRNAs) and translates the encoded message by selecting cognate aminoacyl-transfer RNA (tRNA) molecules. The large subunit (LSU) contains the ribosomal catalytic site termed the peptidyl transferase center (PTC), which catalyzes the formation of peptide bonds, thereby polymerizing the amino acids delivered by tRNAs into a polypeptide chain. The nascent polypeptides leave the ribosome through a tunnel in the LSU and interact with protein factors that function in enzymatic processing, targeting, and the membrane insertion of nascent chains at the exit of the ribosomal tunnel. eS10 plays a role as a positive regulator of the GCN2 kinase activity by stimulating GCN1-mediated GCN2 activation. The protein is Small ribosomal subunit protein eS10A of Saccharomyces cerevisiae (strain ATCC 204508 / S288c) (Baker's yeast).